Reading from the N-terminus, the 89-residue chain is Large ribosomal subunit protein bL31B (89 aa).

This sequence belongs to the bacterial ribosomal protein bL31 family. Type B subfamily. In terms of assembly, part of the 50S ribosomal subunit.

The protein is Large ribosomal subunit protein bL31B of Haemophilus ducreyi (strain 35000HP / ATCC 700724).